A 66-amino-acid polypeptide reads, in one-letter code: Probable Sec-independent protein translocase protein TatE (66 aa).

The chain crosses the membrane as a helical span at residues 1–21; it reads MEGISITKLLVIAVLIVLLFG. Residues 46 to 66 are disordered; sequence ETPAAKKSDGAEAAPRVENKE.

This sequence belongs to the TatA/E family. TatE subfamily.

Its subcellular location is the cell inner membrane. In terms of biological role, part of the twin-arginine translocation (Tat) system that transports large folded proteins containing a characteristic twin-arginine motif in their signal peptide across membranes. TatE shares overlapping functions with TatA. This chain is Probable Sec-independent protein translocase protein TatE, found in Edwardsiella piscicida.